The following is a 194-amino-acid chain: MAIKLIVGLANPGAEYAATRHNAGAWYVDLLAERLRAPLREEPKFFGYTSRITLEGEDVRLLVPTTFMNLSGKAVGAMASFYRIQPDEILVAHDELDLPPGVAKFKLGGGHGGHNGLKDIISKLGNNPNFHRLRVGIGHPGDKNKVVGFVLGKPPVSEQKLIDEAIDEAARCTELWFKEGLAKATSRLHTFKAQ.

TRNA is bound at residue tyrosine 16. Histidine 21 functions as the Proton acceptor in the catalytic mechanism. TRNA-binding residues include phenylalanine 67, asparagine 69, and asparagine 115.

The protein belongs to the PTH family. In terms of assembly, monomer.

The protein resides in the cytoplasm. The catalysed reaction is an N-acyl-L-alpha-aminoacyl-tRNA + H2O = an N-acyl-L-amino acid + a tRNA + H(+). In terms of biological role, hydrolyzes ribosome-free peptidyl-tRNAs (with 1 or more amino acids incorporated), which drop off the ribosome during protein synthesis, or as a result of ribosome stalling. Catalyzes the release of premature peptidyl moieties from peptidyl-tRNA molecules trapped in stalled 50S ribosomal subunits, and thus maintains levels of free tRNAs and 50S ribosomes. This is Peptidyl-tRNA hydrolase from Salmonella agona (strain SL483).